The primary structure comprises 309 residues: Sulfate adenylyltransferase subunit 2 (309 aa).

The protein belongs to the PAPS reductase family. CysD subfamily. As to quaternary structure, heterodimer composed of CysD, the smaller subunit, and CysN.

The catalysed reaction is sulfate + ATP + H(+) = adenosine 5'-phosphosulfate + diphosphate. Its pathway is sulfur metabolism; hydrogen sulfide biosynthesis; sulfite from sulfate: step 1/3. With CysN forms the ATP sulfurylase (ATPS) that catalyzes the adenylation of sulfate producing adenosine 5'-phosphosulfate (APS) and diphosphate, the first enzymatic step in sulfur assimilation pathway. APS synthesis involves the formation of a high-energy phosphoric-sulfuric acid anhydride bond driven by GTP hydrolysis by CysN coupled to ATP hydrolysis by CysD. The sequence is that of Sulfate adenylyltransferase subunit 2 from Mycobacterium bovis (strain ATCC BAA-935 / AF2122/97).